The sequence spans 571 residues: Optineurin (571 aa).

Disordered regions lie at residues 1–32 and 100–144; these read MSHQ…HPNL and LSHE…DQLR. Positions 38-170 form a coiled coil; sequence EELLQQMKEL…VSELQLKLNS (133 aa). The interval 58–209 is interaction with Rab8; sequence MKLNNQAMKG…GPTRTVSIGT (152 aa). 2 stretches are compositionally biased toward basic and acidic residues: residues 100-123 and 130-143; these read LSHE…RSSE and RLPR…KDQL. Residues 176-181 carry the LIR motif; sequence DSFVEI. S177 bears the Phosphoserine; by TBK1 mark. Basic and acidic residues predominate over residues 186 to 197; the sequence is GEAEGSVKEIKH. Disordered regions lie at residues 186–210 and 255–291; these read GEAE…IGTS and VSDF…TVGS. A Phosphoserine modification is found at S198. Positions 201–210 are enriched in polar residues; that stretch reads PTRTVSIGTS. Residues 233–502 adopt a coiled-coil conformation; that stretch reads CLREGNQKVE…LLKENDAFED (270 aa). Composition is skewed to basic and acidic residues over residues 255–268 and 275–286; these read VSDF…RSEI and STEKENEEEKGP. S336 carries the post-translational modification Phosphoserine. The segment at 405–571 is interaction with HD; sequence TRKESEKVDR…LQIHVMDCII (167 aa). The interaction with MYO6 stretch occupies residues 406–514; that stretch reads RKESEKVDRA…RQSLMEMQSR (109 aa). Residues 468 to 473 carry the UBAN motif; the sequence is DFHAER. S520 carries the phosphoserine modification. The CCHC NOA-type zinc-finger motif lies at 541–571; that stretch reads QRNIPIHSCPKCGEVLPDIDTLQIHVMDCII. Zn(2+)-binding residues include C549, C552, H565, and C569.

Self-associates. Interacts with HD. Interacts with GTF3A. Interacts with MYO6. Interacts (via UBAN) with ubiquitinated TFRC. Interacts with GTP-bound Rab8 (RAB8A and/or RAB8B). Interacts with TBC1D17. Interacts with TBK1. Interacts with TRAF3. Binds to linear ubiquitin chains. Interacts with LC3 family members MAP1LC3A, MAP1LC3B, GABARAP, GABARAPL1 and GABARAPL2; OPTN phosphorylation increases the association (at least with MAP1LC3B). Interacts with RAB12; the interaction may be indirect. Interacts with TBK1; this interaction leads to the Golgi localization of TBK1 and its subsequent activation. Interacts with palmitoyltransferase ZDHHC17/HIP14; the interaction does not lead to palmitoylation of OPTN. Interacts with CYLD. Interacts with TOM1; the interaction is indirect and is mediated by MYO6, which acts as a bridge between TOM1 and OPTN. Interacts with USP12; the interaction is independent of USP12 deubiquitinase activity and may be involved in regulation of autophagic flux. Post-translationally, phosphorylated by TBK1, leading to restrict bacterial proliferation in case of infection.

It is found in the cytoplasm. The protein resides in the perinuclear region. The protein localises to the golgi apparatus. Its subcellular location is the trans-Golgi network. It localises to the cytoplasmic vesicle. It is found in the autophagosome. The protein resides in the recycling endosome. Its function is as follows. Plays an important role in the maintenance of the Golgi complex, in membrane trafficking, in exocytosis, through its interaction with myosin VI and Rab8. Links myosin VI to the Golgi complex and plays an important role in Golgi ribbon formation. Negatively regulates the induction of IFNB in response to RNA virus infection. Plays a neuroprotective role in the eye and optic nerve. Probably part of the TNF-alpha signaling pathway that can shift the equilibrium toward induction of cell death. May act by regulating membrane trafficking and cellular morphogenesis via a complex that contains Rab8 and huntingtin (HD). Mediates the interaction of Rab8 with the probable GTPase-activating protein TBC1D17 during Rab8-mediated endocytic trafficking, such as that of transferrin receptor (TFRC/TfR); regulates Rab8 recruitment to tubules emanating from the endocytic recycling compartment. Autophagy receptor that interacts directly with both the cargo to become degraded and an autophagy modifier of the MAP1 LC3 family; targets ubiquitin-coated bacteria (xenophagy) and appears to function in the same pathway as SQSTM1 and CALCOCO2/NDP52. In Macaca fascicularis (Crab-eating macaque), this protein is Optineurin (OPTN).